A 548-amino-acid polypeptide reads, in one-letter code: Natural resistance-associated macrophage protein 1 (548 aa).

Positions 1–38 (MSGDTGPPKQGGTRYGSISSPPSPEPQQAPPGGTYLSE) are disordered. Topologically, residues 1 to 55 (MSGDTGPPKQGGTRYGSISSPPSPEPQQAPPGGTYLSEKIPIPDTESGTFSLRKL) are cytoplasmic. The chain crosses the membrane as a helical span at residues 56–73 (WAFTGPGFLMSIAFLDPG). At 74 to 82 (NIESDLQAG) the chain is on the extracellular side. The chain crosses the membrane as a helical span at residues 83-102 (AVAGFKLLWVLLWATVLGLL). The Cytoplasmic portion of the chain corresponds to 103–139 (CQRLAARLGVVTGKDLGEVCHLYYPKVPRILLWLTIE). The chain crosses the membrane as a helical span at residues 140-160 (LAIVGSDMQEVIGTAIAFSLL). Residues 161-164 (SAGR) lie on the Extracellular side of the membrane. The helical transmembrane segment at 165–184 (IPLWGGVLITVVDTFFFLFL) threads the bilayer. The Cytoplasmic portion of the chain corresponds to 185–193 (DNYGLRKLE). The helical transmembrane segment at 194-214 (AFFGFLITIMALTFGYEYVVA) threads the bilayer. At 215 to 237 (QPAQGALLQGLFLPSCPGCGQPE) the chain is on the extracellular side. Residues 238–256 (LLQAVGIIGAIIMPHNIYL) traverse the membrane as a helical segment. Residues 257–284 (HSSLVKSREVDRSRRADIREANMYFLIE) are Cytoplasmic-facing. A helical membrane pass occupies residues 285–304 (ATIALSVSFLINLFVMAVFG). Residues 305-346 (QAFYKQTNQAAFNICADSSLHDYAPIFPRNNLTVAVDIYQGG) lie on the Extracellular side of the membrane. A glycan (N-linked (GlcNAc...) asparagine) is linked at Asn335. Residues 347–366 (VILGCLFGPPALYIWAVGLL) traverse the membrane as a helical segment. Topologically, residues 367–397 (AAGQSSTMTGTYAGQFVMEGFLKLRWSRFAR) are cytoplasmic. Residues 398 to 415 (VLLTRSCAILPTVLLAVF) traverse the membrane as a helical segment. Residues 416–426 (RDLRDLSGLND) lie on the Extracellular side of the membrane. A helical transmembrane segment spans residues 427–447 (LLNVLQSLLLPFAVLPILTFT). At 448–463 (SMPALMQEFANGLVSK) the chain is on the cytoplasmic side. The chain crosses the membrane as a helical span at residues 464 to 485 (VITSSIMVLVCAVNLYFVISYL). The Extracellular segment spans residues 486–493 (PSLPHPAY). Residues 494 to 513 (FSLVALLAAAYLGLTTYLVW) form a helical membrane-spanning segment. Over 514–548 (TCLITQGATLLAHSSHQRFLYGLPEEDQEKGRTSG) the chain is Cytoplasmic.

It belongs to the NRAMP family.

The protein localises to the late endosome membrane. The protein resides in the lysosome membrane. It carries out the reaction Zn(2+)(in) + H(+)(out) = Zn(2+)(out) + H(+)(in). It catalyses the reaction Fe(2+)(in) + H(+)(out) = Fe(2+)(out) + H(+)(in). The catalysed reaction is Mn(2+)(in) + H(+)(out) = Mn(2+)(out) + H(+)(in). Functionally, macrophage-specific antiporter that fluxes metal ions in either direction against a proton gradient. Localized to late endosomal lysosomal membranes, delivers bivalent cations from the cytosol into these acidic compartments where they may directly affect antimicrobial activity. Involved in iron metabolism and host natural resistance to infection with intracellular parasites. Pathogen resistance involves sequestration of Fe(2+) and Mn(2+), cofactors of both prokaryotic and eukaryotic catalases and superoxide dismutases, not only to protect the macrophage against its own generation of reactive oxygen species, but to deny the cations to the pathogen for synthesis of its protective enzymes. In Bos taurus (Bovine), this protein is Natural resistance-associated macrophage protein 1 (SLC11A1).